Here is a 284-residue protein sequence, read N- to C-terminus: Diaminopimelate epimerase (284 aa).

3 residues coordinate substrate: Asn20, Gln53, and Asn73. Cys82 acts as the Proton donor in catalysis. Residues 83 to 84 (GN), Asn167, Asn200, and 218 to 219 (ER) contribute to the substrate site. Catalysis depends on Cys227, which acts as the Proton acceptor. 228-229 (GS) lines the substrate pocket.

The protein belongs to the diaminopimelate epimerase family. In terms of assembly, homodimer.

The protein localises to the cytoplasm. The catalysed reaction is (2S,6S)-2,6-diaminopimelate = meso-2,6-diaminopimelate. It participates in amino-acid biosynthesis; L-lysine biosynthesis via DAP pathway; DL-2,6-diaminopimelate from LL-2,6-diaminopimelate: step 1/1. Catalyzes the stereoinversion of LL-2,6-diaminopimelate (L,L-DAP) to meso-diaminopimelate (meso-DAP), a precursor of L-lysine and an essential component of the bacterial peptidoglycan. The polypeptide is Diaminopimelate epimerase (Xanthomonas euvesicatoria pv. vesicatoria (strain 85-10) (Xanthomonas campestris pv. vesicatoria)).